A 152-amino-acid chain; its full sequence is Ribosome maturation factor RimP (152 aa).

This sequence belongs to the RimP family.

The protein localises to the cytoplasm. Functionally, required for maturation of 30S ribosomal subunits. The chain is Ribosome maturation factor RimP from Alteromonas mediterranea (strain DSM 17117 / CIP 110805 / LMG 28347 / Deep ecotype).